Here is a 146-residue protein sequence, read N- to C-terminus: Large ribosomal subunit protein uL15 (146 aa).

A disordered region spans residues 1–45 (MTIKLHHLRPAPGSKTERTRVGRGEGSKGKTAGRGTKGTKARKNV). The span at 15 to 28 (KTERTRVGRGEGSK) shows a compositional bias: basic and acidic residues.

The protein belongs to the universal ribosomal protein uL15 family. As to quaternary structure, part of the 50S ribosomal subunit.

In terms of biological role, binds to the 23S rRNA. The protein is Large ribosomal subunit protein uL15 of Mycobacteroides abscessus (strain ATCC 19977 / DSM 44196 / CCUG 20993 / CIP 104536 / JCM 13569 / NCTC 13031 / TMC 1543 / L948) (Mycobacterium abscessus).